The following is a 309-amino-acid chain: Protein FdhE (309 aa).

Belongs to the FdhE family.

It is found in the cytoplasm. Necessary for formate dehydrogenase activity. This chain is Protein FdhE, found in Escherichia coli O127:H6 (strain E2348/69 / EPEC).